A 406-amino-acid polypeptide reads, in one-letter code: Tyrosine--tRNA ligase (406 aa).

Tyrosine 35 is a binding site for L-tyrosine. The 'HIGH' region motif lies at 40 to 49 (ATSASLHIGH). Residues tyrosine 167 and glutamine 171 each contribute to the L-tyrosine site. The short motif at 227–231 (KMGKS) is the 'KMSKS' region element. Lysine 230 contacts ATP. Positions 341-405 (ILLVDLMVLA…IGKKKILRIV (65 aa)) constitute an S4 RNA-binding domain.

The protein belongs to the class-I aminoacyl-tRNA synthetase family. TyrS type 1 subfamily. As to quaternary structure, homodimer.

Its subcellular location is the cytoplasm. The enzyme catalyses tRNA(Tyr) + L-tyrosine + ATP = L-tyrosyl-tRNA(Tyr) + AMP + diphosphate + H(+). Functionally, catalyzes the attachment of tyrosine to tRNA(Tyr) in a two-step reaction: tyrosine is first activated by ATP to form Tyr-AMP and then transferred to the acceptor end of tRNA(Tyr). The chain is Tyrosine--tRNA ligase from Borrelia recurrentis (strain A1).